An 847-amino-acid chain; its full sequence is Rho GTPase-activating protein 12 (847 aa).

Residues 12–74 (PGQAYIEVEY…PAQYVKEVTR (63 aa)) form the SH3 domain. The tract at residues 110 to 241 (LPELSSFGKP…PPNQGRPDSP (132 aa)) is disordered. Polar residues-rich tracts occupy residues 117 to 174 (GKPS…QNRT) and 191 to 200 (TSFSQEQSCD). Position 165 is a phosphoserine (serine 165). Residues serine 201, serine 213, and serine 215 each carry the phosphoserine modification. Positions 224–234 (TEQIRATTPPN) are enriched in polar residues. Phosphothreonine is present on residues threonine 230 and threonine 231. At serine 240 the chain carries Phosphoserine. Position 243 is a phosphotyrosine (tyrosine 243). 2 consecutive WW domains span residues 265–298 (IQIN…PPRW) and 358–391 (DYTN…LPKY). The tract at residues 293–317 (WKPPRWTRDASISKGDFQSPGDQEL) is disordered. Disordered stretches follow at residues 428–466 (DTND…DQEK) and 591–625 (PDSP…SEQK). Positions 445 to 461 (NESSPSSPKHQDTASSP) are enriched in polar residues. The PH domain occupies 463-575 (DQEKYGLLNV…WFKVLSSTIN (113 aa)). Residue serine 593 is modified to Phosphoserine. Residues 595 to 610 (GIEKHDKEKEQKDPKK) are compositionally biased toward basic and acidic residues. Positions 657–845 (SNLANLCQRE…LILLELSSIF (189 aa)) constitute a Rho-GAP domain.

GTPase activator for the Rho-type GTPases by converting them to an inactive GDP-bound state. The chain is Rho GTPase-activating protein 12 (ARHGAP12) from Macaca fascicularis (Crab-eating macaque).